Consider the following 873-residue polypeptide: MAEMEKEGRPPENKRSRKPAHPVKREINEEMKNFAENTMNELLGWYGYDKVELKDGEDIEFRNYSADGESRQHISVLKENSLPKPKLPEDSVISPYNINTSYPGLATGNGLSDSPAGSKDHGNVPIIVPLIPPPFIKPPAEDDVSNVQIMCAWCQKVGIKRYSLSMGSEVKCFCSEKCFAACRRAYFKRNKARDEDGHAENFPQQHYAKETPRLAFKNNCELLVCDWCKHIRHTKEYLDFGDGERRLQFCSAKCLNQYKMDIFYKETQANLPAGLCSTLHPPVENKAEGTGVQLLTPDSWNIPLADARRKAPSPASAAGQIQGPGPSASTTASPSDTANCSVTKIPTPVPKPIPISENPNIPPVSVQPPASIVPPIGVPPRSPPMVMTNRGPVPLPIFMEQQIMQQIRPPFIRGPPHHASNPNSPLSNPMIPGIGPPPGGPRNMGPTSSPMHRPMLSPHIHPPTTPTMPGNPPGLLPPPPPGAPLPSLPFPPVSMMPNGPMPMPQMMNFGLPSLAPLVPPPTLLVPYPVIVPLPVPIPIPIPIPHINDSKPPSGFSSNGENFIPSNSSETPGGKPPNSSSSPRESKQGSSKPSDSSPSCSGQSLNQAQVLQEHSKNEVVDLTVRPSSPVNSKFGFPSVLQGPQDGVIDLTVGHRSRLHNVIHRALHAQVKVEREPNSVVNLAFGSSDKRNCSDCRDNCSPVDSKTLPCGDAAHCCPVSLASGTPGLEAGAAVCNVIVNGTKSTEGSKNPEPPQDPKKPQPPEELAVSELESVKENNCASNCHLEGDTGKKAGEEPLAGGDKQDPNLNNPADEDHAYALRMLPKTGCVIQPVPKPAEKTAIAPCIMSTPILSTGPEDLEPPLKRRCLRIRNQNK.

The segment covering 1 to 14 (MAEMEKEGRPPENK) has biased composition (basic and acidic residues). The tract at residues 1-26 (MAEMEKEGRPPENKRSRKPAHPVKRE) is disordered. FCS-type zinc fingers lie at residues 142-180 (DDVS…KCFA) and 216-256 (FKNN…KCLN). Disordered regions lie at residues 307 to 338 (ARRK…SDTA), 413 to 485 (RGPP…GAPL), 550 to 608 (KPPS…NQAQ), 742 to 766 (STEG…ELAV), and 779 to 811 (SNCH…NPAD). Over residues 312 to 338 (PSPASAAGQIQGPGPSASTTASPSDTA) the composition is skewed to low complexity. A compositionally biased stretch (pro residues) spans 460–485 (IHPPTTPTMPGNPPGLLPPPPPGAPL). Over residues 554–570 (GFSSNGENFIPSNSSET) the composition is skewed to polar residues. Residues 571-603 (PGGKPPNSSSSPRESKQGSSKPSDSSPSCSGQS) are compositionally biased toward low complexity. Residues 783–793 (LEGDTGKKAGE) show a composition bias toward basic and acidic residues.

This sequence belongs to the SOBP family.

Functionally, implicated in development of the cochlea. The polypeptide is Sine oculis-binding protein homolog (Gallus gallus (Chicken)).